Here is an 817-residue protein sequence, read N- to C-terminus: LisH domain-containing protein ARMC9 (817 aa).

Positions 7–39 constitute a LisH domain; the sequence is HESELLGLVKEYLDFAEFEDTLKTFSKECKVKG. Positions 204–230 form a coiled coil; it reads GPNSKELLQQLHQQLVEAERRAMTYLK. At serine 583 the chain carries Phosphoserine. Disordered regions lie at residues 637–659 and 761–817; these read RKGP…TPGG and CKPQ…SIRK. Polar residues predominate over residues 765–774; that stretch reads VPSTPETVEQ. Over residues 793–807 the composition is skewed to low complexity; it reads PQQASRPASTASSTR. Over residues 808 to 817 the composition is skewed to polar residues; that stretch reads GLHSSQSIRK.

As to quaternary structure, interacts with TOGARAM1, CCDC66, CEP104, CSPP1 and CEP290. Interacts with NDUFAF2.

Its subcellular location is the cytoplasm. The protein resides in the cytoskeleton. It is found in the cilium basal body. It localises to the cell projection. The protein localises to the cilium. Its subcellular location is the microtubule organizing center. The protein resides in the centrosome. It is found in the centriole. In terms of biological role, involved in ciliogenesis. It is required for appropriate acetylation and polyglutamylation of ciliary microtubules, and regulation of cilium length. Acts as a positive regulator of hedgehog (Hh) signaling. May participate in the trafficking and/or retention of GLI2 and GLI3 proteins at the ciliary tip. The chain is LisH domain-containing protein ARMC9 from Mus musculus (Mouse).